We begin with the raw amino-acid sequence, 125 residues long: Small ribosomal subunit protein uS13 (125 aa).

The segment at 92–125 (RHRRGLPVRGQRTRTNARTRKGKKKTVGAQAKKK) is disordered.

This sequence belongs to the universal ribosomal protein uS13 family. Part of the 30S ribosomal subunit. Forms a loose heterodimer with protein S19. Forms two bridges to the 50S subunit in the 70S ribosome.

Its function is as follows. Located at the top of the head of the 30S subunit, it contacts several helices of the 16S rRNA. In the 70S ribosome it contacts the 23S rRNA (bridge B1a) and protein L5 of the 50S subunit (bridge B1b), connecting the 2 subunits; these bridges are implicated in subunit movement. Contacts the tRNAs in the A and P-sites. The sequence is that of Small ribosomal subunit protein uS13 from Akkermansia muciniphila (strain ATCC BAA-835 / DSM 22959 / JCM 33894 / BCRC 81048 / CCUG 64013 / CIP 107961 / Muc).